The following is a 145-amino-acid chain: Ribonuclease VapC24 (145 aa).

In terms of domain architecture, PINc spans 4–123; it reads IDTNILLYAQ…RHHGVDEFAT (120 aa). 2 residues coordinate Mg(2+): Asp5 and Asp106.

This sequence belongs to the PINc/VapC protein family. Requires Mg(2+) as cofactor.

In terms of biological role, toxic component of a type II toxin-antitoxin (TA) system. An RNase. Its cognate antitoxin is VapB24. The polypeptide is Ribonuclease VapC24 (Mycobacterium tuberculosis (strain CDC 1551 / Oshkosh)).